The primary structure comprises 268 residues: tRNA (guanine-N(7)-)-methyltransferase (268 aa).

The interval 1-21 (MMAGAEAPQPQKRYYRQRAHS) is disordered. S21 bears the Phosphoserine mark. S-adenosyl-L-methionine-binding residues include G78, E101, R103, N134, A135, and L154. The active site involves D157. Residues 158-166 (PHFKRTKHK) are alphaC helix. S-adenosyl-L-methionine is bound by residues T232 and E234. An alpha6 helix region spans residues 232–240 (TEEGKKVLR).

The protein belongs to the class I-like SAM-binding methyltransferase superfamily. TrmB family. As to quaternary structure, catalytic component of the METTL1-WDR4 complex, composed of METTL1 and WDR4. Phosphorylation at Ser-21 by PKB/AKT1 inactivates its methyltransferase activity via a steric interference mechanism in the active site that locally disrupts the catalytic center. Phosphorylation at Ser-21 does not affect the interaction with WDR4.

The protein localises to the nucleus. The enzyme catalyses guanosine(46) in tRNA + S-adenosyl-L-methionine = N(7)-methylguanosine(46) in tRNA + S-adenosyl-L-homocysteine. It carries out the reaction a guanosine in mRNA + S-adenosyl-L-methionine = an N(7)-methylguanosine in mRNA + S-adenosyl-L-homocysteine. It catalyses the reaction a guanosine in miRNA + S-adenosyl-L-methionine = an N(7)-methylguanosine in miRNA + S-adenosyl-L-homocysteine. It functions in the pathway tRNA modification; N(7)-methylguanine-tRNA biosynthesis. Catalytic component of METTL1-WDR4 methyltransferase complex that mediates the formation of N(7)-methylguanine in a subset of RNA species, such as tRNAs, mRNAs and microRNAs (miRNAs). Catalyzes the formation of N(7)-methylguanine at position 46 (m7G46) in a large subset of tRNAs that contain the 5'-RAGGU-3' motif within the variable loop. M7G46 interacts with C13-G22 in the D-loop to stabilize tRNA tertiary structure and protect tRNAs from decay. Also acts as a methyltransferase for a subset of internal N(7)-methylguanine in mRNAs. Internal N(7)-methylguanine methylation of mRNAs in response to stress promotes their relocalization to stress granules, thereby suppressing their translation. Also methylates a specific subset of miRNAs, such as let-7. N(7)-methylguanine methylation of let-7 miRNA promotes let-7 miRNA processing by disrupting an inhibitory secondary structure within the primary miRNA transcript (pri-miRNA). Acts as a regulator of embryonic stem cell self-renewal and differentiation. This chain is tRNA (guanine-N(7)-)-methyltransferase, found in Mus musculus (Mouse).